Here is a 144-residue protein sequence, read N- to C-terminus: L-fucose mutarotase (144 aa).

The active-site Proton donor is His-22. Residues Asp-30, Arg-109, and 131 to 133 (YGN) contribute to the substrate site.

The protein belongs to the RbsD / FucU family. FucU mutarotase subfamily. As to quaternary structure, homodecamer.

It is found in the cytoplasm. The catalysed reaction is alpha-L-fucose = beta-L-fucose. It functions in the pathway carbohydrate metabolism; L-fucose metabolism. Involved in the anomeric conversion of L-fucose. This chain is L-fucose mutarotase, found in Actinobacillus pleuropneumoniae serotype 5b (strain L20).